The primary structure comprises 135 residues: Protein NrdI (135 aa).

The protein belongs to the NrdI family.

Functionally, probably involved in ribonucleotide reductase function. The chain is Protein NrdI from Rhizobium johnstonii (strain DSM 114642 / LMG 32736 / 3841) (Rhizobium leguminosarum bv. viciae).